Reading from the N-terminus, the 248-residue chain is 1-(5-phosphoribosyl)-5-[(5-phosphoribosylamino)methylideneamino] imidazole-4-carboxamide isomerase (248 aa).

Asp8 functions as the Proton acceptor in the catalytic mechanism. Asp129 functions as the Proton donor in the catalytic mechanism.

Belongs to the HisA/HisF family.

Its subcellular location is the cytoplasm. The catalysed reaction is 1-(5-phospho-beta-D-ribosyl)-5-[(5-phospho-beta-D-ribosylamino)methylideneamino]imidazole-4-carboxamide = 5-[(5-phospho-1-deoxy-D-ribulos-1-ylimino)methylamino]-1-(5-phospho-beta-D-ribosyl)imidazole-4-carboxamide. It participates in amino-acid biosynthesis; L-histidine biosynthesis; L-histidine from 5-phospho-alpha-D-ribose 1-diphosphate: step 4/9. This chain is 1-(5-phosphoribosyl)-5-[(5-phosphoribosylamino)methylideneamino] imidazole-4-carboxamide isomerase, found in Rhizobium etli (strain ATCC 51251 / DSM 11541 / JCM 21823 / NBRC 15573 / CFN 42).